The primary structure comprises 431 residues: Histidine--tRNA ligase (431 aa).

The protein belongs to the class-II aminoacyl-tRNA synthetase family. Homodimer.

It is found in the cytoplasm. The catalysed reaction is tRNA(His) + L-histidine + ATP = L-histidyl-tRNA(His) + AMP + diphosphate + H(+). The chain is Histidine--tRNA ligase from Neisseria meningitidis serogroup C (strain 053442).